Consider the following 205-residue polypeptide: Disintegrin-like leberagin-C (205 aa).

The Disintegrin domain maps to 4 to 90; sequence PPVCGNELLE…DCPIDRFHRN (87 aa). Disulfide bonds link cysteine 7/cysteine 26, cysteine 18/cysteine 36, cysteine 62/cysteine 82, cysteine 69/cysteine 94, cysteine 101/cysteine 106, cysteine 113/cysteine 128, cysteine 151/cysteine 158, cysteine 163/cysteine 171, and cysteine 193/cysteine 198. A D/ECD-tripeptide motif is present at residues 68-70; the sequence is ECD. Residue asparagine 120 is glycosylated (N-linked (GlcNAc...) asparagine).

The protein belongs to the venom metalloproteinase (M12B) family. P-III subfamily. P-IIIb sub-subfamily. Monomer. In terms of tissue distribution, expressed by the venom gland.

The protein resides in the secreted. Functionally, inhibits platelet aggregation induced by thrombin and arachidonic acid with IC(50) of 40 and 50 nM respectively (in rabbit platetelet-rich plasma). It also inhibits the adhesion of melanoma tumor cells on fibrinogen and fibronectin, by interfering with the function of alpha-V/beta-3 (ITGAV/ITGB3) and, to a lesser extent, with alpha-V/beta-6 (ITGAV/ITGB6) and alpha-5/beta-1 (ITGA5/ITGB1) integrins. The chain is Disintegrin-like leberagin-C from Macrovipera lebetina transmediterranea (Blunt-nosed viper).